The sequence spans 185 residues: Meiotic recombination protein REC104 (185 aa).

The segment at alanine 146 to valine 168 is disordered.

Potential transcriptional regulator that is required to activate expression of a number of early meiotic genes including HOP1. The protein is Meiotic recombination protein REC104 (REC104) of Saccharomyces pastorianus (Lager yeast).